The chain runs to 290 residues: Fructose-1,6-bisphosphatase class 1 (290 aa).

Mg(2+)-binding residues include glutamate 78, aspartate 96, leucine 98, and aspartate 99. Residues aspartate 99–serine 102, tyrosine 201, and lysine 226 contribute to the substrate site. Residue glutamate 232 coordinates Mg(2+).

Belongs to the FBPase class 1 family. As to quaternary structure, homotetramer. The cofactor is Mg(2+).

It localises to the cytoplasm. It carries out the reaction beta-D-fructose 1,6-bisphosphate + H2O = beta-D-fructose 6-phosphate + phosphate. The protein operates within carbohydrate biosynthesis; gluconeogenesis. This is Fructose-1,6-bisphosphatase class 1 from Helicobacter pylori (strain HPAG1).